The primary structure comprises 141 residues: Large ribosomal subunit protein uL14 (141 aa).

This sequence belongs to the universal ribosomal protein uL14 family. Part of the 50S ribosomal subunit. Forms a cluster with proteins L3 and L24e, part of which may contact the 16S rRNA in 2 intersubunit bridges.

Functionally, binds to 23S rRNA. Forms part of two intersubunit bridges in the 70S ribosome. This chain is Large ribosomal subunit protein uL14, found in Thermofilum pendens (strain DSM 2475 / Hrk 5).